Consider the following 196-residue polypeptide: Proteasome subunit beta 1 (196 aa).

The propeptide at methionine 1–alanine 6 is removed in mature form; by autocatalysis. Catalysis depends on threonine 7, which acts as the Nucleophile.

This sequence belongs to the peptidase T1B family. As to quaternary structure, the 20S proteasome core is composed of 14 alpha and 14 beta subunits that assemble into four stacked heptameric rings, resulting in a barrel-shaped structure. The two inner rings, each composed of seven catalytic beta subunits, are sandwiched by two outer rings, each composed of seven alpha subunits. The catalytic chamber with the active sites is on the inside of the barrel. Has a gated structure, the ends of the cylinder being occluded by the N-termini of the alpha-subunits. Is capped at one or both ends by the proteasome regulatory ATPase, PAN.

It localises to the cytoplasm. The enzyme catalyses Cleavage of peptide bonds with very broad specificity.. Its activity is regulated as follows. The formation of the proteasomal ATPase PAN-20S proteasome complex, via the docking of the C-termini of PAN into the intersubunit pockets in the alpha-rings, triggers opening of the gate for substrate entry. Interconversion between the open-gate and close-gate conformations leads to a dynamic regulation of the 20S proteasome proteolysis activity. In terms of biological role, component of the proteasome core, a large protease complex with broad specificity involved in protein degradation. The chain is Proteasome subunit beta 1 from Saccharolobus islandicus (strain Y.N.15.51 / Yellowstone #2) (Sulfolobus islandicus).